The following is a 195-amino-acid chain: GTP-dependent dephospho-CoA kinase (195 aa).

Asp-49, Val-50, Asp-68, Glu-127, and Asp-150 together coordinate GTP.

This sequence belongs to the GTP-dependent DPCK family.

The catalysed reaction is 3'-dephospho-CoA + GTP = GDP + CoA + H(+). Its pathway is cofactor biosynthesis; coenzyme A biosynthesis. Catalyzes the GTP-dependent phosphorylation of the 3'-hydroxyl group of dephosphocoenzyme A to form coenzyme A (CoA). The sequence is that of GTP-dependent dephospho-CoA kinase from Methanosarcina acetivorans (strain ATCC 35395 / DSM 2834 / JCM 12185 / C2A).